Reading from the N-terminus, the 243-residue chain is 6-carboxyhexanoate--CoA ligase (243 aa).

Belongs to the BioW family. As to quaternary structure, homodimer. It depends on Mg(2+) as a cofactor.

It catalyses the reaction heptanedioate + ATP + CoA = 6-carboxyhexanoyl-CoA + AMP + diphosphate. It functions in the pathway metabolic intermediate metabolism; pimeloyl-CoA biosynthesis; pimeloyl-CoA from pimelate: step 1/1. Its function is as follows. Catalyzes the transformation of pimelate into pimeloyl-CoA with concomitant hydrolysis of ATP to AMP. This chain is 6-carboxyhexanoate--CoA ligase, found in Thermocrinis albus (strain DSM 14484 / JCM 11386 / HI 11/12).